Reading from the N-terminus, the 729-residue chain is Zorya protein ZorA (729 aa).

A run of 3 helical transmembrane segments spans residues 20 to 40 (PATV…FYFF), 135 to 155 (LPGI…MIGL), and 177 to 197 (VLYA…ITWL).

Belongs to the MotA family.

The protein localises to the cell inner membrane. In terms of biological role, component of antiviral defense system Zorya type I, composed of ZorA, ZorB, ZorC and ZorD. Expression of Zorya type I in E.coli (strain MG1655) confers 10,000-fold resistance to phage SECphi27, 100-fold resistance to lambda, and 10-fold resistance to T7. While most T7 infected Zorya-containing cells undergo abortive infection, a minority produce viable phage progeny. These eventually accumulate to a high multiplicity of infection, leading to culture collapse by 2 hours after initial infection. ZorA and ZorB probably assemble in the cell inner membrane and exert their effect there. The chain is Zorya protein ZorA from Escherichia coli O139:H28 (strain E24377A / ETEC).